A 183-amino-acid polypeptide reads, in one-letter code: Streptavidin-V2 (183 aa).

Residues 1 to 24 (MRKIVVAAIAVSLTTVGITASASA) form the signal peptide. One can recognise an Avidin-like domain in the interval 37 to 159 (AEAGITGTWY…GHDTFTKVKP (123 aa)). Biotin-binding residues include Y67 and Y78. The Cell attachment site; atypical signature appears at 83 to 85 (RYD). 3 residues coordinate biotin: W116, W132, and W144.

It belongs to the avidin/streptavidin family. In terms of assembly, homotetramer.

It is found in the secreted. In terms of biological role, the biological function of streptavidin is not known. Forms a strong non-covalent specific complex with biotin (one molecule of biotin per subunit of streptavidin). This is Streptavidin-V2 from Streptomyces violaceus (Streptomyces venezuelae).